Reading from the N-terminus, the 739-residue chain is Phosphoribosylformylglycinamidine synthase subunit PurL (739 aa).

Histidine 54 is an active-site residue. 2 residues coordinate ATP: tyrosine 57 and lysine 96. A Mg(2+)-binding site is contributed by glutamate 98. Residues 99-102 and arginine 121 each bind substrate; that span reads SHNH. The active-site Proton acceptor is the histidine 100. Aspartate 122 lines the Mg(2+) pocket. Glutamine 245 contributes to the substrate binding site. Residue aspartate 273 coordinates Mg(2+). 317-319 serves as a coordination point for substrate; the sequence is ESQ. 2 residues coordinate ATP: aspartate 500 and glycine 537. Asparagine 538 is a Mg(2+) binding site. Serine 540 lines the substrate pocket.

It belongs to the FGAMS family. Monomer. Part of the FGAM synthase complex composed of 1 PurL, 1 PurQ and 2 PurS subunits.

The protein localises to the cytoplasm. It carries out the reaction N(2)-formyl-N(1)-(5-phospho-beta-D-ribosyl)glycinamide + L-glutamine + ATP + H2O = 2-formamido-N(1)-(5-O-phospho-beta-D-ribosyl)acetamidine + L-glutamate + ADP + phosphate + H(+). It participates in purine metabolism; IMP biosynthesis via de novo pathway; 5-amino-1-(5-phospho-D-ribosyl)imidazole from N(2)-formyl-N(1)-(5-phospho-D-ribosyl)glycinamide: step 1/2. In terms of biological role, part of the phosphoribosylformylglycinamidine synthase complex involved in the purines biosynthetic pathway. Catalyzes the ATP-dependent conversion of formylglycinamide ribonucleotide (FGAR) and glutamine to yield formylglycinamidine ribonucleotide (FGAM) and glutamate. The FGAM synthase complex is composed of three subunits. PurQ produces an ammonia molecule by converting glutamine to glutamate. PurL transfers the ammonia molecule to FGAR to form FGAM in an ATP-dependent manner. PurS interacts with PurQ and PurL and is thought to assist in the transfer of the ammonia molecule from PurQ to PurL. The polypeptide is Phosphoribosylformylglycinamidine synthase subunit PurL (Bacillus cereus (strain ATCC 14579 / DSM 31 / CCUG 7414 / JCM 2152 / NBRC 15305 / NCIMB 9373 / NCTC 2599 / NRRL B-3711)).